Here is a 464-residue protein sequence, read N- to C-terminus: ERO1-like protein alpha (464 aa).

The N-terminal stretch at 1 to 23 (MGRAWGLLVGLLGVVWLLRLGHG) is a signal peptide. 8 cysteine pairs are disulfide-bonded: cysteine 35–cysteine 48, cysteine 37–cysteine 46, cysteine 85–cysteine 387, cysteine 94–cysteine 99, cysteine 94–cysteine 130, cysteine 99–cysteine 104, cysteine 207–cysteine 237, and cysteine 390–cysteine 393. 3 positions are modified to phosphoserine: serine 106, serine 142, and serine 144. Positions 186, 188, and 199 each coordinate FAD. FAD-binding residues include serine 248 and histidine 251. A glycan (N-linked (GlcNAc...) asparagine) is linked at asparagine 276. Arginine 283 and arginine 296 together coordinate FAD. N-linked (GlcNAc...) asparagine glycosylation is present at asparagine 380.

It belongs to the EROs family. In terms of assembly, predominantly monomer. May function both as a monomer and a homodimer. Interacts with PDILT. Interacts with ERP44; the interaction results in retention of ERO1A in the endoplasmic reticulum. FAD is required as a cofactor. In terms of processing, N-glycosylated. Post-translationally, the Cys-94/Cys-99 and Cys-390/Cys-393 disulfide bonds constitute the redox-active center. The Cys-94/Cys-99 disulfide bond may accept electron from P4HB and funnel them to the active site disulfide Cys-390/Cys-393. The regulatory Cys-99/Cys-104 disulfide bond stabilizes the other regulatory bond Cys-94/Cys-130. Phosphorylated on Ser-144 by FAM20C in the Golgi which increases its enzymatic activity. Phosphorylation is induced by lactation. It is also induced by hypoxia and reductive stress. As to expression, widely expressed (at protein level). In the mammary gland, expressed at higher levels in lactating mice than in virgin mice (at protein level).

The protein localises to the endoplasmic reticulum membrane. Its subcellular location is the golgi apparatus lumen. It localises to the secreted. It is found in the cell projection. The protein resides in the dendrite. Enzyme activity is tightly regulated to prevent the accumulation of reactive oxygen species in the endoplasmic reticulum. Reversibly down-regulated by the formation of disulfide bonds between the active site Cys-94 and Cys-130, and between Cys-99 and Cys-104. Glutathione may be required to regulate its activity in the endoplasmic reticulum. In terms of biological role, oxidoreductase involved in disulfide bond formation in the endoplasmic reticulum. Efficiently reoxidizes P4HB/PDI, the enzyme catalyzing protein disulfide formation, in order to allow P4HB to sustain additional rounds of disulfide formation. Following P4HB reoxidation, passes its electrons to molecular oxygen via FAD, leading to the production of reactive oxygen species (ROS) in the cell. Required for the proper folding of immunoglobulins. Plays an important role in ER stress-induced, CHOP-dependent apoptosis by activating the inositol 1,4,5-trisphosphate receptor IP3R1. The polypeptide is ERO1-like protein alpha (Mus musculus (Mouse)).